Here is a 214-residue protein sequence, read N- to C-terminus: Large ribosomal subunit protein uL16 (214 aa).

Arg32 is subject to Citrulline. Lys175 is covalently cross-linked (Glycyl lysine isopeptide (Lys-Gly) (interchain with G-Cter in SUMO2)). A Glycyl lysine isopeptide (Lys-Gly) (interchain with G-Cter in ubiquitin) cross-link involves residue Lys188.

The protein belongs to the universal ribosomal protein uL16 family. Component of the large ribosomal subunit. Mature ribosomes consist of a small (40S) and a large (60S) subunit. The 40S subunit contains about 33 different proteins and 1 molecule of RNA (18S). The 60S subunit contains about 49 different proteins and 3 molecules of RNA (28S, 5.8S and 5S). Citrullinated by PADI4. Post-translationally, ufmylated by UFL1.

It is found in the cytoplasm. Its function is as follows. Component of the large ribosomal subunit. Plays a role in the formation of actively translating ribosomes. May play a role in the embryonic brain development. The polypeptide is Large ribosomal subunit protein uL16 (Homo sapiens (Human)).